The chain runs to 321 residues: Sideroflexin-1-3 (321 aa).

5 helical membrane-spanning segments follow: residues 101 to 121 (IITG…FWQW), 146 to 168 (LVTS…NHAV), 174 to 194 (LLGR…NIPC), 220 to 240 (AAVV…IPGM), and 266 to 286 (IQTL…CAFF).

The protein belongs to the sideroflexin family.

Its subcellular location is the mitochondrion membrane. In terms of biological role, mitochondrial amino-acid transporter that mediates transport of serine into mitochondria. In Drosophila melanogaster (Fruit fly), this protein is Sideroflexin-1-3.